Consider the following 191-residue polypeptide: Corrinoid adenosyltransferase (191 aa).

ATP-binding positions include 10–18, Lys-28, 140–145, and Asn-166; these read TRTGDNGTT and RRAERS.

Belongs to the Cob(I)alamin adenosyltransferase family.

The protein resides in the cytoplasm. The enzyme catalyses 2 cob(II)yrinate a,c diamide + reduced [electron-transfer flavoprotein] + 2 ATP = 2 adenosylcob(III)yrinate a,c-diamide + 2 triphosphate + oxidized [electron-transfer flavoprotein] + 3 H(+). The catalysed reaction is 2 cob(II)alamin + reduced [electron-transfer flavoprotein] + 2 ATP = 2 adenosylcob(III)alamin + 2 triphosphate + oxidized [electron-transfer flavoprotein] + 3 H(+). The protein operates within cofactor biosynthesis; adenosylcobalamin biosynthesis; adenosylcobalamin from cob(II)yrinate a,c-diamide: step 2/7. In Mycobacterium leprae (strain TN), this protein is Corrinoid adenosyltransferase.